The primary structure comprises 633 residues: Probable potassium transport system protein Kup 2 (633 aa).

12 consecutive transmembrane segments (helical) span residues 18-38 (FVGLVVGAIGVVYGDIGTSPL), 61-81 (LISLMIWTLTIIVTFKYVLFL), 107-127 (VPVLFFAGLIGSALFIGDAMI), 143-163 (ITPAFAEYVPPLSAAIMIVLF), 176-196 (FFGPITVLWFFAMAAGGVIHI), 211-231 (ALSFLAHAGTVGLIVLGAVFL), 255-275 (WFVLVFPALLLNYLGQGALVL), 293-313 (ALLPVVLLATLATIIASQAVI), 345-365 (IYVPSVNLLLLTGVLMLIFSF), 371-391 (LATAYGISVTGAMVITTMLAF), 402-422 (FMLASAALLPLFVIEVVFLAA), and 429-449 (DGGWVPVALALAIMTLMWTWT).

Belongs to the HAK/KUP transporter (TC 2.A.72) family.

It is found in the cell inner membrane. The enzyme catalyses K(+)(in) + H(+)(in) = K(+)(out) + H(+)(out). Transport of potassium into the cell. Likely operates as a K(+):H(+) symporter. The polypeptide is Probable potassium transport system protein Kup 2 (Rhizobium etli (strain ATCC 51251 / DSM 11541 / JCM 21823 / NBRC 15573 / CFN 42)).